Reading from the N-terminus, the 319-residue chain is ATP-dependent 6-phosphofructokinase (319 aa).

Gly-11 provides a ligand contact to ATP. 21 to 25 contacts ADP; the sequence is RAVVR. Residues 72–73 and 102–105 contribute to the ATP site; these read RY and GDGS. Asp-103 serves as a coordination point for Mg(2+). Residue 125–127 participates in substrate binding; the sequence is TID. Asp-127 (proton acceptor) is an active-site residue. Arg-154 contributes to the ADP binding site. Substrate-binding positions include Arg-162 and 169–171; that span reads MGR. Residues 185-187, Arg-211, and 213-215 each bind ADP; these read GAE and KKH. Residues Glu-222, Arg-243, and 249–252 contribute to the substrate site; that span reads HVQR.

It belongs to the phosphofructokinase type A (PFKA) family. ATP-dependent PFK group I subfamily. Prokaryotic clade 'B1' sub-subfamily. As to quaternary structure, homotetramer. Requires Mg(2+) as cofactor.

It is found in the cytoplasm. The enzyme catalyses beta-D-fructose 6-phosphate + ATP = beta-D-fructose 1,6-bisphosphate + ADP + H(+). It functions in the pathway carbohydrate degradation; glycolysis; D-glyceraldehyde 3-phosphate and glycerone phosphate from D-glucose: step 3/4. With respect to regulation, allosterically activated by ADP and other diphosphonucleosides, and allosterically inhibited by phosphoenolpyruvate. Catalyzes the phosphorylation of D-fructose 6-phosphate to fructose 1,6-bisphosphate by ATP, the first committing step of glycolysis. This chain is ATP-dependent 6-phosphofructokinase, found in Listeria welshimeri serovar 6b (strain ATCC 35897 / DSM 20650 / CCUG 15529 / CIP 8149 / NCTC 11857 / SLCC 5334 / V8).